We begin with the raw amino-acid sequence, 157 residues long: Small ribosomal subunit protein uS7cz/uS7cy (157 aa).

This sequence belongs to the universal ribosomal protein uS7 family. In terms of assembly, part of the 30S ribosomal subunit.

The protein localises to the plastid. Its subcellular location is the chloroplast. Its function is as follows. One of the primary rRNA binding proteins, it binds directly to 16S rRNA where it nucleates assembly of the head domain of the 30S subunit. This Gnetum parvifolium (Small-leaved jointfir) protein is Small ribosomal subunit protein uS7cz/uS7cy (rps7-A).